Here is a 109-residue protein sequence, read N- to C-terminus: CRISPR-associated endoribonuclease Cas2 (109 aa).

Residue D8 coordinates Mg(2+).

This sequence belongs to the CRISPR-associated endoribonuclease Cas2 protein family. In terms of assembly, homodimer, forms a heterotetramer with a Cas1 homodimer. Requires Mg(2+) as cofactor.

In terms of biological role, CRISPR (clustered regularly interspaced short palindromic repeat), is an adaptive immune system that provides protection against mobile genetic elements (viruses, transposable elements and conjugative plasmids). CRISPR clusters contain sequences complementary to antecedent mobile elements and target invading nucleic acids. CRISPR clusters are transcribed and processed into CRISPR RNA (crRNA). Functions as a ssRNA-specific endoribonuclease. Involved in the integration of spacer DNA into the CRISPR cassette. This chain is CRISPR-associated endoribonuclease Cas2, found in Streptococcus mutans serotype c (strain ATCC 700610 / UA159).